The chain runs to 582 residues: Actin-histidine N-methyltransferase (582 aa).

Residues R75, 104-106 (EGF), R254, 275-279 (DMCNH), and 325-327 (NGF) contribute to the S-adenosyl-L-methionine site. Residues 94–314 (DGFELVEFPE…SGEQIYIFYG (221 aa)) enclose the SET domain. Residues 550 to 582 (DKDLLPNGTKSENDSFLAEDNQQETGNAKDFCS) are disordered.

It belongs to the class V-like SAM-binding methyltransferase superfamily. SETD3 actin-histidine methyltransferase family.

Its subcellular location is the cytoplasm. It catalyses the reaction L-histidyl-[protein] + S-adenosyl-L-methionine = N(tele)-methyl-L-histidyl-[protein] + S-adenosyl-L-homocysteine + H(+). In terms of biological role, protein-histidine N-methyltransferase that specifically mediates 3-methylhistidine (tele-methylhistidine) methylation of actin at 'His-73'. Does not have protein-lysine N-methyltransferase activity and probably only catalyzes histidine methylation of actin. This Xenopus tropicalis (Western clawed frog) protein is Actin-histidine N-methyltransferase.